We begin with the raw amino-acid sequence, 239 residues long: Norbelladine 4'-O-methyltransferase 5 (239 aa).

Residues V55, E77, 79-80 (GV), S85, D103, and A132 contribute to the S-adenosyl-L-methionine site. D155 is a binding site for a divalent metal cation. D157 lines the S-adenosyl-L-methionine pocket. A divalent metal cation contacts are provided by D181 and N182.

This sequence belongs to the class I-like SAM-binding methyltransferase superfamily. Cation-dependent O-methyltransferase family. The cofactor is Mg(2+).

It carries out the reaction norbelladine + S-adenosyl-L-methionine = 4'-O-methylnorbelladine + S-adenosyl-L-homocysteine + H(+). It functions in the pathway alkaloid biosynthesis. 4'-O-methyltransferase converting norbelladine to 4'-O-methylnorbelladine. 4'-O-methylnorbelladine is a precursor to all Amaryllidaceae alkaloids such as galanthamine, lycorine and haemanthamine, and including haemanthamine- and crinamine-type alkaloids, promising anticancer agents. The sequence is that of Norbelladine 4'-O-methyltransferase 5 from Narcissus aff. pseudonarcissus MK-2014 (Daffodil).